Consider the following 498-residue polypeptide: ATP synthase subunit beta, chloroplastic (498 aa).

172-179 (GGAGVGKT) serves as a coordination point for ATP.

This sequence belongs to the ATPase alpha/beta chains family. As to quaternary structure, F-type ATPases have 2 components, CF(1) - the catalytic core - and CF(0) - the membrane proton channel. CF(1) has five subunits: alpha(3), beta(3), gamma(1), delta(1), epsilon(1). CF(0) has four main subunits: a(1), b(1), b'(1) and c(9-12).

The protein resides in the plastid. It is found in the chloroplast thylakoid membrane. The catalysed reaction is ATP + H2O + 4 H(+)(in) = ADP + phosphate + 5 H(+)(out). Produces ATP from ADP in the presence of a proton gradient across the membrane. The catalytic sites are hosted primarily by the beta subunits. The chain is ATP synthase subunit beta, chloroplastic from Phaseolus vulgaris (Kidney bean).